Reading from the N-terminus, the 193-residue chain is Acyl carrier protein phosphodiesterase (193 aa).

Belongs to the AcpH family.

It catalyses the reaction holo-[ACP] + H2O = apo-[ACP] + (R)-4'-phosphopantetheine + H(+). Its function is as follows. Converts holo-ACP to apo-ACP by hydrolytic cleavage of the phosphopantetheine prosthetic group from ACP. The sequence is that of Acyl carrier protein phosphodiesterase from Escherichia coli O6:K15:H31 (strain 536 / UPEC).